Reading from the N-terminus, the 135-residue chain is ATP synthase epsilon chain (135 aa).

It belongs to the ATPase epsilon chain family. As to quaternary structure, F-type ATPases have 2 components, CF(1) - the catalytic core - and CF(0) - the membrane proton channel. CF(1) has five subunits: alpha(3), beta(3), gamma(1), delta(1), epsilon(1). CF(0) has three main subunits: a, b and c.

The protein localises to the cell inner membrane. Functionally, produces ATP from ADP in the presence of a proton gradient across the membrane. In Rhodopseudomonas palustris (strain HaA2), this protein is ATP synthase epsilon chain.